The sequence spans 165 residues: NADPH-dependent 7-cyano-7-deazaguanine reductase (165 aa).

Residue cysteine 56 is the Thioimide intermediate of the active site. Aspartate 63 (proton donor) is an active-site residue. Residues 78–80 (VES) and 97–98 (HE) each bind substrate.

Belongs to the GTP cyclohydrolase I family. QueF type 1 subfamily.

It localises to the cytoplasm. It catalyses the reaction 7-aminomethyl-7-carbaguanine + 2 NADP(+) = 7-cyano-7-deazaguanine + 2 NADPH + 3 H(+). It participates in tRNA modification; tRNA-queuosine biosynthesis. Catalyzes the NADPH-dependent reduction of 7-cyano-7-deazaguanine (preQ0) to 7-aminomethyl-7-deazaguanine (preQ1). In Bacillus pumilus (strain SAFR-032), this protein is NADPH-dependent 7-cyano-7-deazaguanine reductase.